The following is a 123-amino-acid chain: Small ribosomal subunit protein uS12 (123 aa).

Asp89 bears the 3-methylthioaspartic acid mark.

Belongs to the universal ribosomal protein uS12 family. Part of the 30S ribosomal subunit. Contacts proteins S8 and S17. May interact with IF1 in the 30S initiation complex.

Its function is as follows. With S4 and S5 plays an important role in translational accuracy. Interacts with and stabilizes bases of the 16S rRNA that are involved in tRNA selection in the A site and with the mRNA backbone. Located at the interface of the 30S and 50S subunits, it traverses the body of the 30S subunit contacting proteins on the other side and probably holding the rRNA structure together. The combined cluster of proteins S8, S12 and S17 appears to hold together the shoulder and platform of the 30S subunit. This Methylobacterium radiotolerans (strain ATCC 27329 / DSM 1819 / JCM 2831 / NBRC 15690 / NCIMB 10815 / 0-1) protein is Small ribosomal subunit protein uS12.